We begin with the raw amino-acid sequence, 155 residues long: Desiccation-related protein clone PCC6-19 (155 aa).

Positions 1–155 (MAQFGGEKYG…IKEKLPGGQH (155 aa)) are disordered. Gly residues-rich tracts occupy residues 27 to 39 (AHRG…GGQQ) and 47 to 76 (GVLG…GALG). The segment covering 83 to 92 (GSSSSSSSSE) has biased composition (low complexity). The span at 118-135 (TTTDQQQYGTAATHGQAQ) shows a compositional bias: polar residues. Basic and acidic residues predominate over residues 136 to 155 (QHEKKGIMDKIKEKLPGGQH).

It belongs to the plant dehydrin family.

In Craterostigma plantagineum (Blue gem), this protein is Desiccation-related protein clone PCC6-19.